The primary structure comprises 295 residues: Pyridoxal 5'-phosphate synthase subunit PdxS (295 aa).

Asp25 provides a ligand contact to D-ribose 5-phosphate. Residue Lys82 is the Schiff-base intermediate with D-ribose 5-phosphate of the active site. Gly154 is a D-ribose 5-phosphate binding site. Residue Arg166 coordinates D-glyceraldehyde 3-phosphate. Residues Gly215 and Gly236–Ser237 each bind D-ribose 5-phosphate.

Belongs to the PdxS/SNZ family. In the presence of PdxT, forms a dodecamer of heterodimers.

The catalysed reaction is aldehydo-D-ribose 5-phosphate + D-glyceraldehyde 3-phosphate + L-glutamine = pyridoxal 5'-phosphate + L-glutamate + phosphate + 3 H2O + H(+). It functions in the pathway cofactor biosynthesis; pyridoxal 5'-phosphate biosynthesis. Its function is as follows. Catalyzes the formation of pyridoxal 5'-phosphate from ribose 5-phosphate (RBP), glyceraldehyde 3-phosphate (G3P) and ammonia. The ammonia is provided by the PdxT subunit. Can also use ribulose 5-phosphate and dihydroxyacetone phosphate as substrates, resulting from enzyme-catalyzed isomerization of RBP and G3P, respectively. The polypeptide is Pyridoxal 5'-phosphate synthase subunit PdxS (Bacillus cereus (strain Q1)).